A 218-amino-acid chain; its full sequence is Charged multivesicular body protein 6 (218 aa).

2 coiled-coil regions span residues 15–42 and 70–172; these read EDKI…QTQV and QEKM…AQQY.

The protein belongs to the SNF7 family. As to quaternary structure, probable core component of the endosomal sorting required for transport complex III (ESCRT-III).

Its subcellular location is the endosome membrane. Functionally, probable core component of the endosomal sorting required for transport complex III (ESCRT-III) which is involved in multivesicular bodies (MVBs) formation and sorting of endosomal cargo proteins into MVBs. MVBs contain intraluminal vesicles (ILVs) that are generated by invagination and scission from the limiting membrane of the endosome and are delivered to lysosomes enabling degradation of membrane proteins. The polypeptide is Charged multivesicular body protein 6 (chmp6) (Dictyostelium discoideum (Social amoeba)).